The primary structure comprises 876 residues: Paramyosin (876 aa).

Residues methionine 1 to aspartate 28 are nonhelical region. Residues leucine 29–threonine 855 adopt a coiled-coil conformation. The interval threonine 856 to tyrosine 876 is nonhelical region.

The protein belongs to the paramyosin family. In terms of assembly, homodimer.

Its subcellular location is the cytoplasm. It localises to the myofibril. Its function is as follows. Paramyosin is a major structural component of many thick filaments isolated from invertebrate muscles. This Sarcoptes scabiei (Itch mite) protein is Paramyosin.